Here is a 331-residue protein sequence, read N- to C-terminus: Meiotically up-regulated gene 172 protein (331 aa).

Residues 72 to 166 (IKNNEYEKQR…KGNYGLVKAR (95 aa)) adopt a coiled-coil conformation.

The protein belongs to the ADIP family.

The protein localises to the cytoplasm. Its function is as follows. Has a role in meiosis. This is Meiotically up-regulated gene 172 protein (mug172) from Schizosaccharomyces pombe (strain 972 / ATCC 24843) (Fission yeast).